Consider the following 296-residue polypeptide: POM121-like protein 12 (296 aa).

Disordered regions lie at residues 1 to 54 (MGAA…SPWP) and 142 to 162 (APPE…RPAG). The span at 34 to 52 (SRSPSTPQTTPSPQGRQSP) shows a compositional bias: low complexity.

Belongs to the POM121 family.

In Homo sapiens (Human), this protein is POM121-like protein 12 (POM121L12).